A 307-amino-acid chain; its full sequence is MVQSIDINKKLESILDKEEIKNNILMKNYTSFKVGGPADIFVTPNSYEKVKGVINICKENNIPYFILGNGSNVLVRDGGIRGVVVSFNKLNKVYAEGNKVIAESGTLLSMVANTALKSDLTGLEFAHGIPGSVGGAVTMNAGAYNGEISQVIESATVIDNNGKIIKLSKEELDLSYRNSIILKNGYVVLNATFALQKGDHDAIKGRMDDLMRRRKEKQPLEYPSAGSTFKRPEGYFAAKLIEDSGLKGTHVGDAEVSIKHSGFLINKGKASAKDILDLIEVVKKTVKEKFNVELNTEVRIVGEESEN.

The FAD-binding PCMH-type domain occupies 33–198 (KVGGPADIFV…LNATFALQKG (166 aa)). The active site involves Arg177. Ser227 acts as the Proton donor in catalysis. Glu297 is an active-site residue.

The protein belongs to the MurB family. Requires FAD as cofactor.

The protein resides in the cytoplasm. It carries out the reaction UDP-N-acetyl-alpha-D-muramate + NADP(+) = UDP-N-acetyl-3-O-(1-carboxyvinyl)-alpha-D-glucosamine + NADPH + H(+). Its pathway is cell wall biogenesis; peptidoglycan biosynthesis. Cell wall formation. This is UDP-N-acetylenolpyruvoylglucosamine reductase from Clostridium novyi (strain NT).